Reading from the N-terminus, the 143-residue chain is uncharacterized protein (143 aa).

Helical transmembrane passes span 20–39 (FKYC…WITV) and 113–135 (YFSL…ITGL).

It is found in the membrane. This is an uncharacterized protein from Saccharomyces cerevisiae (strain ATCC 204508 / S288c) (Baker's yeast).